A 603-amino-acid chain; its full sequence is UvrABC system protein C (603 aa).

Residues 15–92 (DQPGCYLMKD…IKKHDPRFNI (78 aa)) enclose the GIY-YIG domain. A UVR domain is found at 197-232 (KTVKNDLMKKMQEAAENMEFEKAGEFRDQINAIETT).

It belongs to the UvrC family. In terms of assembly, interacts with UvrB in an incision complex.

The protein localises to the cytoplasm. The UvrABC repair system catalyzes the recognition and processing of DNA lesions. UvrC both incises the 5' and 3' sides of the lesion. The N-terminal half is responsible for the 3' incision and the C-terminal half is responsible for the 5' incision. The protein is UvrABC system protein C of Listeria monocytogenes serotype 4b (strain CLIP80459).